Here is a 201-residue protein sequence, read N- to C-terminus: Recombination protein RecR (201 aa).

The C4-type zinc finger occupies 57-72 (CADCRTFTEQEVCNIC). The 96-residue stretch at 81–176 (GQICVVESPA…EASRIAHGVP (96 aa)) folds into the Toprim domain.

This sequence belongs to the RecR family.

Functionally, may play a role in DNA repair. It seems to be involved in an RecBC-independent recombinational process of DNA repair. It may act with RecF and RecO. This chain is Recombination protein RecR, found in Salmonella arizonae (strain ATCC BAA-731 / CDC346-86 / RSK2980).